A 102-amino-acid chain; its full sequence is Phosphoribosyl-ATP pyrophosphatase (102 aa).

Belongs to the PRA-PH family.

The protein resides in the cytoplasm. It carries out the reaction 1-(5-phospho-beta-D-ribosyl)-ATP + H2O = 1-(5-phospho-beta-D-ribosyl)-5'-AMP + diphosphate + H(+). It participates in amino-acid biosynthesis; L-histidine biosynthesis; L-histidine from 5-phospho-alpha-D-ribose 1-diphosphate: step 2/9. This chain is Phosphoribosyl-ATP pyrophosphatase, found in Ignicoccus hospitalis (strain KIN4/I / DSM 18386 / JCM 14125).